Here is a 419-residue protein sequence, read N- to C-terminus: MQQSGQKGTRNTLQHAIGPVLVIAQFFGVLPVAGVWPSCRPERVRFRWISLSLLAALILFVFSIVDCALSSKVVFDHGLKIYTIGSLSFSVICIFCFGVFLLLSRRWPYIIRRTAECEQIFLEPEYDCSYGRGYSSRLRLWGVCMLVAALCEHSTYVGSALYNNHLAIVECKLDANFWQNYFQRERQQLFLIMHFTAWWIPFIEWTTLSMTFVWNFVDIFLILICRGMQMRFQQMHWRIRQHVRQQMPNEFWQRIRCDLLDLSDLLGIYDKELSGLIVLSCAHNMYFVCVQIYHSFQSKGNYADELYFWFCLSYVIIRVLNMMFAASSIPQEAKEISYTLYEIPTEFWCVELRRLNEIFLSDHFALSGKGYFLLTRRLIFAMAATLMVYELVLINQMAGSEVQKSFCEGGVGSSKSIFS.

Residues 1-15 lie on the Cytoplasmic side of the membrane; that stretch reads MQQSGQKGTRNTLQH. The chain crosses the membrane as a helical span at residues 16 to 36; sequence AIGPVLVIAQFFGVLPVAGVW. The Extracellular segment spans residues 37 to 48; sequence PSCRPERVRFRW. Residues 49-69 form a helical membrane-spanning segment; it reads ISLSLLAALILFVFSIVDCAL. Topologically, residues 70-82 are cytoplasmic; it reads SSKVVFDHGLKIY. Residues 83 to 103 form a helical membrane-spanning segment; that stretch reads TIGSLSFSVICIFCFGVFLLL. Over 104–139 the chain is Extracellular; the sequence is SRRWPYIIRRTAECEQIFLEPEYDCSYGRGYSSRLR. The chain crosses the membrane as a helical span at residues 140–160; it reads LWGVCMLVAALCEHSTYVGSA. The Cytoplasmic segment spans residues 161–204; that stretch reads LYNNHLAIVECKLDANFWQNYFQRERQQLFLIMHFTAWWIPFIE. Residues 205-225 traverse the membrane as a helical segment; it reads WTTLSMTFVWNFVDIFLILIC. Residues 226–305 lie on the Extracellular side of the membrane; it reads RGMQMRFQQM…FQSKGNYADE (80 aa). Residues 306 to 326 form a helical membrane-spanning segment; it reads LYFWFCLSYVIIRVLNMMFAA. The Cytoplasmic portion of the chain corresponds to 327–377; the sequence is SSIPQEAKEISYTLYEIPTEFWCVELRRLNEIFLSDHFALSGKGYFLLTRR. Residues 378-398 form a helical membrane-spanning segment; it reads LIFAMAATLMVYELVLINQMA. Over 399-419 the chain is Extracellular; it reads GSEVQKSFCEGGVGSSKSIFS.

Belongs to the insect chemoreceptor superfamily. Gustatory receptor (GR) family. Gr5a subfamily. In terms of tissue distribution, expressed in Gr5a-expressing sugar-sensing cells.

The protein resides in the cell membrane. In terms of biological role, one of the few identified sugar gustatory receptors identified so far and which promotes the starvation-induced increase of feeding motivation. This Drosophila melanogaster (Fruit fly) protein is Gustatory receptor for sugar taste 64c (Gr64c).